Here is a 554-residue protein sequence, read N- to C-terminus: Inactive sesquithujene synthase (554 aa).

Residues D308 and D312 each coordinate Mg(2+). Residues D308, D312, R449, and N452 each contribute to the substrate site. Residues 308–312 carry the DDXXD motif motif; that stretch reads DDMFD. N452, S456, and E460 together coordinate Mg(2+).

The protein belongs to the terpene synthase family. As to quaternary structure, monomer. Requires Mg(2+) as cofactor. It depends on Mn(2+) as a cofactor.

It is found in the cytoplasm. Its pathway is secondary metabolite biosynthesis; terpenoid biosynthesis. Functionally, non-functional sesquiterpene synthase having less than 1% of the activity found in cv. Delprim. The protein is Inactive sesquithujene synthase of Zea mays (Maize).